Here is a 308-residue protein sequence, read N- to C-terminus: MARTDNDTWDLASSVGATATMVAAARAVATRAPDAVIDDPFAEPLVRAVGVDFFTRLATGDLTPTDLDPDATGGAGNMDRFADGMAARTRFFDDFFSDAADAGVRQAVILASGLDSRAYRLPWPAGTVVFEIDQPGVITFKSDTLARLGAKPTADHRTVPVDLRDDWIGALEAAGFDRTEPSAWIAEGLFGYLPPEAQDRLLDQITELSPPGSRLAVEGVVSSPDADDEQIRERMQAVRDQWRQFGFDLDFSELVYTGERAEVAAYLGERGWRTDSITATALLEKCGLQSAEDSSANFADVRYVTAVK.

S-adenosyl-L-methionine-binding positions include D133 and 162–163 (DL).

Belongs to the UPF0677 family.

Exhibits S-adenosyl-L-methionine-dependent methyltransferase activity. This Mycobacterium sp. (strain JLS) protein is Putative S-adenosyl-L-methionine-dependent methyltransferase Mjls_1073.